The following is a 430-amino-acid chain: MLDPNLLRNEPDAVAEKLARRGFKLDVDKLRALEERRKVLQVNTENLQAERNSRSKSIGQAKARGEDIEPLRLEVNKLGEELDAAKAELETLLAEIRDIALTIPNLPADEVPVGKDENDNVEVSRWGTPREFDFEIRDHVTLGEMHSGLDFAAAVKLTGSRFVVMKGQIARMHRALSQFMLDLHTEQHGYSENYVPYLVNHDTLYGTGQLPKFAGDLFHTRPLEEEADSSNYALIPTAEVPLTNLVRDEIIDEDQLPIKMTAHTPCFRSEAGSYGRDTRGLIRMHQFDKVEMVQIVRPEDSMAALEEMTGHAEKVLQLLGLPYRKIILCTGDMGFGACKTYDLEVWVPAQNTYREISSCSNVWDFQARRMQARCRSKSDKKTRLVHTLNGSGLAVGRTLVAVMENYQQADGRIEVPEVLRPYMNGLEYIG.

L-serine is bound at residue 237 to 239; that stretch reads TAE. Residue 268 to 270 coordinates ATP; it reads RSE. Glu-291 contacts L-serine. Position 355 to 358 (355 to 358) interacts with ATP; sequence EISS. Ser-391 serves as a coordination point for L-serine.

Belongs to the class-II aminoacyl-tRNA synthetase family. Type-1 seryl-tRNA synthetase subfamily. In terms of assembly, homodimer. The tRNA molecule binds across the dimer.

It localises to the cytoplasm. The enzyme catalyses tRNA(Ser) + L-serine + ATP = L-seryl-tRNA(Ser) + AMP + diphosphate + H(+). It catalyses the reaction tRNA(Sec) + L-serine + ATP = L-seryl-tRNA(Sec) + AMP + diphosphate + H(+). It participates in aminoacyl-tRNA biosynthesis; selenocysteinyl-tRNA(Sec) biosynthesis; L-seryl-tRNA(Sec) from L-serine and tRNA(Sec): step 1/1. Functionally, catalyzes the attachment of serine to tRNA(Ser). Is also able to aminoacylate tRNA(Sec) with serine, to form the misacylated tRNA L-seryl-tRNA(Sec), which will be further converted into selenocysteinyl-tRNA(Sec). In Salmonella heidelberg (strain SL476), this protein is Serine--tRNA ligase.